The primary structure comprises 96 residues: Large ribosomal subunit protein uL23 (96 aa).

The protein belongs to the universal ribosomal protein uL23 family. In terms of assembly, part of the 50S ribosomal subunit. Contacts protein L29, and trigger factor when it is bound to the ribosome.

Its function is as follows. One of the early assembly proteins it binds 23S rRNA. One of the proteins that surrounds the polypeptide exit tunnel on the outside of the ribosome. Forms the main docking site for trigger factor binding to the ribosome. The protein is Large ribosomal subunit protein uL23 of Bacillus cereus (strain ATCC 10987 / NRS 248).